Here is a 421-residue protein sequence, read N- to C-terminus: 3-isopropylmalate dehydratase large subunit (421 aa).

[4Fe-4S] cluster is bound by residues Cys302, Cys362, and Cys365.

The protein belongs to the aconitase/IPM isomerase family. LeuC type 2 subfamily. In terms of assembly, heterodimer of LeuC and LeuD. [4Fe-4S] cluster is required as a cofactor.

The enzyme catalyses (2R,3S)-3-isopropylmalate = (2S)-2-isopropylmalate. It functions in the pathway amino-acid biosynthesis; L-leucine biosynthesis; L-leucine from 3-methyl-2-oxobutanoate: step 2/4. Functionally, catalyzes the isomerization between 2-isopropylmalate and 3-isopropylmalate, via the formation of 2-isopropylmaleate. This is 3-isopropylmalate dehydratase large subunit from Campylobacter curvus (strain 525.92).